Reading from the N-terminus, the 648-residue chain is Probable potassium transport system protein Kup 1 (648 aa).

Residues 1 to 31 (MSDAVTDADGSSAQSHAQSAGHHAVQGHGGH) are disordered. Positions 10–26 (GSSAQSHAQSAGHHAVQ) are enriched in low complexity. A run of 12 helical transmembrane segments spans residues 39–59 (LAVG…LYAL), 73–93 (LLHI…IVTF), 130–150 (IILL…ITPA), 165–185 (PDMH…LFFI), 193–213 (VAAF…VLGA), 243–263 (FLAM…YADM), 275–295 (WLVF…SLLI), 317–337 (LLFI…SGAF), 364–384 (IFIP…VLVF), 394–414 (YGIA…VVLF), 421–441 (APAA…YLGA), and 446–466 (IPDG…LLTT).

Belongs to the HAK/KUP transporter (TC 2.A.72) family.

Its subcellular location is the cell inner membrane. It carries out the reaction K(+)(in) + H(+)(in) = K(+)(out) + H(+)(out). Transport of potassium into the cell. Likely operates as a K(+):H(+) symporter. The sequence is that of Probable potassium transport system protein Kup 1 from Novosphingobium aromaticivorans (strain ATCC 700278 / DSM 12444 / CCUG 56034 / CIP 105152 / NBRC 16084 / F199).